We begin with the raw amino-acid sequence, 248 residues long: tRNA (guanine-N(1)-)-methyltransferase (248 aa).

S-adenosyl-L-methionine contacts are provided by residues glycine 116 and 135–140 (IGDFVL).

The protein belongs to the RNA methyltransferase TrmD family. In terms of assembly, homodimer.

The protein localises to the cytoplasm. It carries out the reaction guanosine(37) in tRNA + S-adenosyl-L-methionine = N(1)-methylguanosine(37) in tRNA + S-adenosyl-L-homocysteine + H(+). Specifically methylates guanosine-37 in various tRNAs. This is tRNA (guanine-N(1)-)-methyltransferase from Anaeromyxobacter sp. (strain Fw109-5).